Here is a 69-residue protein sequence, read N- to C-terminus: Bacteriocin microcin B17 (69 aa).

Positions 1-26 (MELKASEFGVVLSVDALKLSRQSPLG) are excised as a propeptide. Positions 39–40 (GS) form a cross-link, oxazole-4-carboxylic acid (Gly-Ser). Residues 40-41 (SC) constitute a cross-link (thiazole-4-carboxylic acid (Ser-Cys)). 3 cross-links (thiazole-4-carboxylic acid (Gly-Cys)) span residues 47–48 (GC), 50–51 (GC), and 54–55 (GC). A cross-link (oxazole-4-carboxylic acid (Cys-Ser)) is located at residues 55-56 (CS). 2 consecutive cross-links (oxazole-4-carboxylic acid (Gly-Ser)) follow at residues 61–62 (GS) and 64–65 (GS).

The processed N-terminus does not resemble a typical secretion signal sequence. In terms of processing, maturation of thiazole and oxazole containing antibiotics involves the enzymatic condensation of a Cys, Ser or Thr with the alpha-carbonyl of the preceding amino acid to form a thioether or ether bond, then dehydration to form a double bond with the alpha-amino nitrogen. Thiazoline or oxazoline rings are dehydrogenated to form thiazole or oxazole rings.

This glycine-rich peptide antibiotic inhibits DNA replication in many enteric bacteria, that leads to induction of the SOS repair system, massive DNA degradation and cell death. B17 inhibits type II topoisomerase by trapping an enzyme - DNA cleavable complex. The chain is Bacteriocin microcin B17 (mcbA) from Escherichia coli.